We begin with the raw amino-acid sequence, 355 residues long: Anthranilate phosphoribosyltransferase (355 aa).

5-phospho-alpha-D-ribose 1-diphosphate contacts are provided by residues G85, 88–89 (GD), T93, 95–98 (NIST), 113–121 (KHGNRAASS), and S125. G85 is a binding site for anthranilate. S97 contributes to the Mg(2+) binding site. N116 contacts anthranilate. R171 contributes to the anthranilate binding site. The Mg(2+) site is built by D229 and E230.

The protein belongs to the anthranilate phosphoribosyltransferase family. As to quaternary structure, homodimer. Mg(2+) serves as cofactor.

The catalysed reaction is N-(5-phospho-beta-D-ribosyl)anthranilate + diphosphate = 5-phospho-alpha-D-ribose 1-diphosphate + anthranilate. It functions in the pathway amino-acid biosynthesis; L-tryptophan biosynthesis; L-tryptophan from chorismate: step 2/5. Catalyzes the transfer of the phosphoribosyl group of 5-phosphorylribose-1-pyrophosphate (PRPP) to anthranilate to yield N-(5'-phosphoribosyl)-anthranilate (PRA). In Acidothermus cellulolyticus (strain ATCC 43068 / DSM 8971 / 11B), this protein is Anthranilate phosphoribosyltransferase.